A 323-amino-acid chain; its full sequence is Fatty acid desaturase 4, chloroplastic (323 aa).

A chloroplast-targeting transit peptide spans 1–77 (MAVSLPTKYP…PRPNREKLVV (77 aa)). Helical transmembrane passes span 101 to 121 (WVAAGCTTLFVSLAKSVIGGF) and 131 to 151 (LAGYAGYILADLGSGVYHWAI). The short motif at 170-173 (QGHH) is the Histidine box-1 element. The helical transmembrane segment at 204 to 224 (LAFNDPVFHGFVCTFAFCILF) threads the bilayer. The short motif at 229 to 233 (HAWAH) is the Histidine box-2 element. Residues 258-262 (HAEHH) carry the Histidine box-3 motif.

It belongs to the fatty acid desaturase CarF family. Fe(2+) serves as cofactor.

It is found in the plastid. Its subcellular location is the chloroplast membrane. The catalysed reaction is a 1-acyl-2-hexadecanoyl-glycerolipid + 2 reduced [2Fe-2S]-[ferredoxin] + O2 + 2 H(+) = a 1-acyl-2-[(3E)-hexadec-3-enoyl]-glycerolipid + 2 oxidized [2Fe-2S]-[ferredoxin] + 2 H2O. It functions in the pathway lipid metabolism; fatty acid metabolism. Functionally, fatty acid desaturase involved in the production of chloroplast-specific phosphatidylglycerol molecular species containing 16:1(3E). Catalyzes the formation of a trans double bond introduced close to the carboxyl group of palmitic acid, which is specifically esterified to the sn-2 glyceryl carbon of phosphatidylglycerol. The protein is Fatty acid desaturase 4, chloroplastic of Arabidopsis thaliana (Mouse-ear cress).